A 446-amino-acid polypeptide reads, in one-letter code: Tol-Pal system protein TolB (446 aa).

Positions 1-24 (MKRAFLSALSVGLAALFLTGPAQA) are cleaved as a signal peptide.

It belongs to the TolB family. In terms of assembly, the Tol-Pal system is composed of five core proteins: the inner membrane proteins TolA, TolQ and TolR, the periplasmic protein TolB and the outer membrane protein Pal. They form a network linking the inner and outer membranes and the peptidoglycan layer.

It is found in the periplasm. Its function is as follows. Part of the Tol-Pal system, which plays a role in outer membrane invagination during cell division and is important for maintaining outer membrane integrity. The protein is Tol-Pal system protein TolB of Dinoroseobacter shibae (strain DSM 16493 / NCIMB 14021 / DFL 12).